Reading from the N-terminus, the 320-residue chain is Stress-induced-phosphoprotein 1 (320 aa).

TPR repeat units follow at residues 5–38 (AIAE…DPSN), 40–72 (TFYN…GRET), 80–113 (AKAM…FRDP), 140–173 (AQEE…DPEN), 175–207 (ILYS…DSKF), and 208–241 (IKGY…DPSN). The segment at 241 to 269 (NEEAREGVRNCLRSNDEDPEKAKERSLAD) is disordered. The span at 242 to 269 (EEAREGVRNCLRSNDEDPEKAKERSLAD) shows a compositional bias: basic and acidic residues. One can recognise an STI1 domain in the interval 269–308 (DPEVQEILRDPGMRMILEQMSNDPGAVREHLKNPEIFQKL).

Forms a complex with hsp-1/hsp70 and daf-21/hsp90. Interacts with daf-21/hsp90 (via the C-terminal MEEVD pentapeptide). In terms of tissue distribution, expressed ubiquitously in the whole body. Detected predominantly in the pharyngeal muscles, vulva epithelial cells, striated body-wall muscles, spermathecae and intestinal cell ring. Also observed in the tail regions of hermaphrodite and in the sensory rays and spicules of males.

Its subcellular location is the cytoplasm. Plays a role in gonad development. Up-regulates longevity and thermotolerance. Binds daf-21/hsp90 and inhibits its ATPase activity. This chain is Stress-induced-phosphoprotein 1, found in Caenorhabditis elegans.